The primary structure comprises 103 residues: MTTLTKADLAELLFEKVGLNKREAKDVVESFFDEIRLALEKGDIVKLSGFGNFQCREKPQRPGRNPKTGEEMPISARRVVTFHASQKLKSQVEGARIGTPSQE.

The interval 55–74 (CREKPQRPGRNPKTGEEMPI) is disordered.

It belongs to the bacterial histone-like protein family. As to quaternary structure, heterodimer of an alpha and a beta chain.

In terms of biological role, this protein is one of the two subunits of integration host factor, a specific DNA-binding protein that functions in genetic recombination as well as in transcriptional and translational control. This chain is Integration host factor subunit alpha, found in Thiobacillus denitrificans (strain ATCC 25259 / T1).